Reading from the N-terminus, the 1728-residue chain is Lysophospholipase NTE1 (1728 aa).

Topologically, residues 1–44 (MDSSSIAHESDIVSTERNILPERFISNKQQGNYLEDGSGDGNGK) are cytoplasmic. The helical transmembrane segment at 45–65 (AAEHWLLAAIFNFFWVISYFI) threads the bilayer. Residues 66–97 (SGSTHIAFRSSWYIVSLLLLKFPKWIIVEANH) lie on the Lumenal side of the membrane. The chain crosses the membrane as a helical span at residues 98–118 (IHLTIPFSVLVVTLAIIFYVS). Residues 119–1728 (YEFLKGRLLS…GFFLHRRNSI (1610 aa)) lie on the Cytoplasmic side of the membrane. Residues 141–150 (SLNSKNSKSS) are compositionally biased toward low complexity. Disordered stretches follow at residues 141–167 (SLNS…RRRR), 285–368 (RKKK…DEST), 406–436 (NDNV…LSTS), 454–488 (TEAS…VTTP), 596–660 (NLQK…TGSR), and 687–756 (ASPS…FTSF). A compositionally biased stretch (basic and acidic residues) spans 153-162 (LHHDSKDSNT). 2 stretches are compositionally biased toward polar residues: residues 293-303 (SRHGQYNNNSD) and 326-336 (MRSSSRNQNIP). Over residues 345–367 (SSDEESDINDGDSESQSESDDES) the composition is skewed to acidic residues. Composition is skewed to polar residues over residues 406-424 (NDNV…NYTN), 454-479 (TEAS…SKSI), and 599-609 (KGFQSPTSSRL). Over residues 610-628 (TSNFNGNSNNQRTNSRNSQ) the composition is skewed to low complexity. Polar residues-rich tracts occupy residues 642–657 (ELSQ…TPIT) and 729–756 (IYNN…FTSF). A nucleoside 3',5'-cyclic phosphate contacts are provided by residues 854–987 (SPTL…LTSL) and 983–1121 (SLTS…VAKK). The tract at residues 1034–1055 (PELEENSTDYPNDGEEKDSSRD) is disordered. Residues 1036–1049 (LEENSTDYPNDGEE) show a composition bias toward acidic residues. The PNPLA domain occupies 1422 to 1586 (LVLGGGGARG…VDNLPVLEMK (165 aa)). A GXGXXG motif is present at residues 1426–1431 (GGGARG). The GXSXG motif lies at 1453–1457 (GTSIG). Residue S1455 is the Nucleophile of the active site. Catalysis depends on D1573, which acts as the Proton acceptor. The short motif at 1573–1575 (DGG) is the DGA/G element.

Belongs to the NTE family.

Its subcellular location is the endoplasmic reticulum membrane. It catalyses the reaction a 1-acyl-sn-glycero-3-phosphocholine + H2O = sn-glycerol 3-phosphocholine + a fatty acid + H(+). With respect to regulation, inhibited by organophosphorus esters. Intracellular phospholipase B that catalyzes the double deacylation of phosphatidylcholine (PC) to glycerophosphocholine (GroPCho). Plays an important role in membrane lipid homeostasis. Responsible for the rapid PC turnover in response to inositol, elevated temperatures, or when choline is present in the growth medium. This Candida glabrata (strain ATCC 2001 / BCRC 20586 / JCM 3761 / NBRC 0622 / NRRL Y-65 / CBS 138) (Yeast) protein is Lysophospholipase NTE1 (NTE1).